A 241-amino-acid chain; its full sequence is Probable FKBP-type peptidyl-prolyl cis-trans isomerase (241 aa).

Positions 150–241 constitute a PPIase FKBP-type domain; that stretch reads TDTVKVHYTG…VLDVNPKSEK (92 aa).

Belongs to the FKBP-type PPIase family.

The catalysed reaction is [protein]-peptidylproline (omega=180) = [protein]-peptidylproline (omega=0). PPIases accelerate the folding of proteins. It catalyzes the cis-trans isomerization of proline imidic peptide bonds in oligopeptides. In Haemophilus influenzae (strain ATCC 51907 / DSM 11121 / KW20 / Rd), this protein is Probable FKBP-type peptidyl-prolyl cis-trans isomerase.